A 1107-amino-acid chain; its full sequence is OTU domain-containing protein 4 (1107 aa).

Position 1 is an N-acetylmethionine (Met1). An OTU domain is found at 34–155; that stretch reads LYRKLVAKDG…GNHYDIVYPI (122 aa). The interval 39-45 is cys-loop; the sequence is VAKDGSC. Asp42 is an active-site residue. Residue Cys45 is the Nucleophile of the active site. Residues 94-104 form a variable-loop region; the sequence is LENPQEWVGQV. Tyr120 is modified (phosphotyrosine). A phosphoserine mark is found at Ser126 and Ser128. Residue Thr131 is modified to Phosphothreonine. Residues 143–148 are his-loop; sequence FSNGNH. The active site involves His148. A phosphoserine mark is found at Ser166, Ser199, Ser202, and Ser204. Residues 195–206 are compositionally biased toward acidic residues; sequence EESNSEISDSED. Disordered regions lie at residues 195–239 and 322–431; these read EESN…SADL and KHTP…DFDH. A compositionally biased stretch (polar residues) spans 226–236; it reads GSENPKNNGNS. Position 340 is a phosphoserine (Ser340). Positions 392–403 are enriched in low complexity; the sequence is SSHSTGSQSQKS. Residues 419-431 are compositionally biased toward basic and acidic residues; it reads RKPDRERAEDFDH. The residue at position 438 (Tyr438) is a Phosphotyrosine. A Phosphoserine modification is found at Ser442. Tyr459 carries the phosphotyrosine modification. The interval 470-568 is disordered; sequence PALSSSSVSQ…KPAEHIPLSN (99 aa). Positions 473–486 are enriched in low complexity; the sequence is SSSSVSQSPSQNSN. The segment covering 495–528 has biased composition (basic and acidic residues); sequence HARDRKGSMRRADAEERKDKDSLRGHTHVDKKPE. Phosphoserine occurs at positions 544 and 895. The tract at residues 918 to 1107 is disordered; sequence LSAASVSSKH…MGDGHRGQHT (190 aa). The segment covering 963-994 has biased composition (basic and acidic residues); that stretch reads NREREPGSAEPEPKRTIQSLKEKPEKVKDPKT. 4 positions are modified to phosphoserine: Ser1000, Ser1005, Ser1016, and Ser1017. Residues 1032–1041 are compositionally biased toward polar residues; it reads SKQFYNQTYG. Residue Ser1042 is modified to Phosphoserine. 2 stretches are compositionally biased toward basic and acidic residues: residues 1060–1079 and 1089–1107; these read VRGE…EGYQ and YRGD…GQHT.

Interacts with MYD88; the interaction is direct. Interacts with ALKBH3; the interaction is direct. Interacts with USP7; the interaction is direct. Interacts with USP9X; the interaction is direct. In terms of processing, phosphorylation at Ser-202 and Ser-204 activates 'Lys-63'-specific deubiquitinase activity. Induced upon stimulation with IL1B.

The protein resides in the cytoplasm. It localises to the nucleus. It carries out the reaction Thiol-dependent hydrolysis of ester, thioester, amide, peptide and isopeptide bonds formed by the C-terminal Gly of ubiquitin (a 76-residue protein attached to proteins as an intracellular targeting signal).. Its activity is regulated as follows. Phosphorylation on Ser-202 and Ser-204 induces 'Lys-63'-specific deubiquitinase activity. Its function is as follows. Deubiquitinase which hydrolyzes the isopeptide bond between the ubiquitin C-terminus and the lysine epsilon-amino group of the target protein. May negatively regulate inflammatory and pathogen recognition signaling in innate immune response. Upon phosphorylation at Ser-202 and Ser-204 residues, via IL-1 receptor and Toll-like receptor signaling pathway, specifically deubiquitinates 'Lys-63'-polyubiquitinated MYD88 adapter protein triggering down-regulation of NF-kappa-B-dependent transcription of inflammatory mediators. Independently of the catalytic activity, acts as a scaffold for alternative deubiquitinases to assemble specific deubiquitinase-substrate complexes. Associates with USP7 and USP9X deubiquitinases to stabilize alkylation repair enzyme ALKBH3, thereby promoting the repair of alkylated DNA lesions. This is OTU domain-containing protein 4 from Mus musculus (Mouse).